Reading from the N-terminus, the 140-residue chain is Heavy metal-associated isoprenylated plant protein 31 (140 aa).

The HMA domain maps to Met-3–Glu-67. 2 residues coordinate a metal cation: Cys-14 and Cys-17. The residue at position 137 (Cys-137) is a Cysteine methyl ester. Cys-137 is lipidated: S-farnesyl cysteine. The propeptide at Thr-138–Met-140 is removed in mature form.

It belongs to the HIPP family.

Functionally, heavy-metal-binding protein. The protein is Heavy metal-associated isoprenylated plant protein 31 of Arabidopsis thaliana (Mouse-ear cress).